Here is a 180-residue protein sequence, read N- to C-terminus: Large ribosomal subunit protein uL5 (180 aa).

The protein belongs to the universal ribosomal protein uL5 family. As to quaternary structure, part of the 50S ribosomal subunit; part of the 5S rRNA/L5/L18/L25 subcomplex. Contacts the 5S rRNA and the P site tRNA. Forms a bridge to the 30S subunit in the 70S ribosome.

This is one of the proteins that bind and probably mediate the attachment of the 5S RNA into the large ribosomal subunit, where it forms part of the central protuberance. In the 70S ribosome it contacts protein S13 of the 30S subunit (bridge B1b), connecting the 2 subunits; this bridge is implicated in subunit movement. Contacts the P site tRNA; the 5S rRNA and some of its associated proteins might help stabilize positioning of ribosome-bound tRNAs. The protein is Large ribosomal subunit protein uL5 of Lactobacillus acidophilus (strain ATCC 700396 / NCK56 / N2 / NCFM).